The primary structure comprises 390 residues: Galactokinase (390 aa).

Residue 33 to 36 (EHTD) coordinates substrate. Residues Ser-67 and 124 to 130 (GSGLSSS) each bind ATP. Residues Ser-130 and Glu-162 each contribute to the Mg(2+) site. Asp-174 serves as the catalytic Proton acceptor. Tyr-224 provides a ligand contact to substrate.

The protein belongs to the GHMP kinase family. GalK subfamily.

Its subcellular location is the cytoplasm. It carries out the reaction alpha-D-galactose + ATP = alpha-D-galactose 1-phosphate + ADP + H(+). It functions in the pathway carbohydrate metabolism; galactose metabolism. Its function is as follows. Catalyzes the transfer of the gamma-phosphate of ATP to D-galactose to form alpha-D-galactose-1-phosphate (Gal-1-P). The chain is Galactokinase from Streptococcus suis (strain 05ZYH33).